A 235-amino-acid polypeptide reads, in one-letter code: 1-Cys peroxiredoxin (235 aa).

The Thioredoxin domain maps to 5-179 (ILLGDKFPDF…ILRVVDSLQL (175 aa)). C49 is an active-site residue. C49 serves as the catalytic Cysteine sulfenic acid (-SOH) intermediate.

The protein belongs to the peroxiredoxin family. Prx6 subfamily.

Its subcellular location is the cytoplasm. The catalysed reaction is a hydroperoxide + [protein]-dithiol = [protein]-disulfide + an alcohol + H2O. Thiol-specific peroxidase that catalyzes the reduction of hydrogen peroxide and organic hydroperoxides to water and alcohols, respectively. Plays a role in cell protection against oxidative stress by detoxifying peroxides. The polypeptide is 1-Cys peroxiredoxin (Dirofilaria immitis (Canine heartworm)).